A 201-amino-acid chain; its full sequence is Superoxide dismutase [Mn] (201 aa).

Mn(2+) contacts are provided by His-27, His-81, Asp-163, and His-167.

This sequence belongs to the iron/manganese superoxide dismutase family. In terms of assembly, homodimer. It depends on Mn(2+) as a cofactor.

It catalyses the reaction 2 superoxide + 2 H(+) = H2O2 + O2. Functionally, destroys superoxide anion radicals which are normally produced within the cells and which are toxic to biological systems. May play a critical role against oxidative stress, affecting both the survival and the virulence of S.pneumoniae. This chain is Superoxide dismutase [Mn] (sodA), found in Streptococcus pneumoniae serotype 4 (strain ATCC BAA-334 / TIGR4).